Here is a 152-residue protein sequence, read N- to C-terminus: Nucleoside diphosphate kinase A (152 aa).

Positions 12, 60, 88, and 94 each coordinate ATP. A Glycyl lysine isopeptide (Lys-Gly) (interchain with G-Cter in ubiquitin) cross-link involves residue K100. The ATP site is built by R105 and N115. H118 functions as the Pros-phosphohistidine intermediate in the catalytic mechanism. S120, S122, and S125 each carry phosphoserine.

This sequence belongs to the NDK family. In terms of assembly, hexamer of two different chains: An and B (A6, A5B, A4B2, A3B3, A2B4, AB5, B6). Interacts with PRUNE1. Component of the SET complex, composed of at least ANP32A, APEX1, HMGB2, NME1, SET and TREX1. Within this complex, interacts directly with SET. Also interacts with TREX1, but only following translocation to the nucleus. It depends on Mg(2+) as a cofactor.

Its subcellular location is the cytoplasm. It localises to the nucleus. It catalyses the reaction a 2'-deoxyribonucleoside 5'-diphosphate + ATP = a 2'-deoxyribonucleoside 5'-triphosphate + ADP. It carries out the reaction a ribonucleoside 5'-diphosphate + ATP = a ribonucleoside 5'-triphosphate + ADP. With respect to regulation, autophosphorylation at His-118 increases serine/threonine protein kinase activity of the enzyme. Interaction with the SET complex inhibits exonuclease activity. Functionally, major role in the synthesis of nucleoside triphosphates other than ATP. The ATP gamma phosphate is transferred to the NDP beta phosphate via a ping-pong mechanism, using a phosphorylated active-site intermediate. Possesses nucleoside-diphosphate kinase, serine/threonine-specific protein kinase, geranyl and farnesyl pyrophosphate kinase, histidine protein kinase and 3'-5' exonuclease activities. Involved in cell proliferation, differentiation and development, signal transduction, G protein-coupled receptor endocytosis, and gene expression. Required for neural development including neural patterning and cell fate determination. During GZMA-mediated cell death, works in concert with TREX1. NME1 nicks one strand of DNA and TREX1 removes bases from the free 3' end to enhance DNA damage and prevent DNA end reannealing and rapid repair. This chain is Nucleoside diphosphate kinase A (Nme1), found in Rattus norvegicus (Rat).